The sequence spans 73 residues: Omega-hexatoxin-Ar1b (73 aa).

The first 22 residues, 1-22 (MNTATGFIVLLVLATVLGCIEA), serve as a signal peptide directing secretion. A propeptide spanning residues 23 to 37 (GESHVREDAMGRARR) is cleaved from the precursor. Cystine bridges form between C40/C54, C47/C58, and C53/C72.

The protein belongs to the neurotoxin 08 (Shiva) family. 01 (omega toxin) subfamily. Expressed by the venom gland.

The protein resides in the secreted. Functionally, insecticidal toxin that reversibly and voltage-independently blocks both mid-low- (M-LVA) and high-voltage-activated (HVA) calcium channels (Cav) in cockroach DUM neurons. Also causes a modest block of insect sodium channel currents (Nav). Induces potent excitatory symptoms, followed by flaccid paralysis leading to death in house crickets. The sequence is that of Omega-hexatoxin-Ar1b from Atrax robustus (Sydney funnel-web spider).